Reading from the N-terminus, the 90-residue chain is Small ribosomal subunit protein uS17 (90 aa).

This sequence belongs to the universal ribosomal protein uS17 family. As to quaternary structure, part of the 30S ribosomal subunit.

One of the primary rRNA binding proteins, it binds specifically to the 5'-end of 16S ribosomal RNA. This chain is Small ribosomal subunit protein uS17, found in Acidiphilium cryptum (strain JF-5).